Consider the following 452-residue polypeptide: Probable pectate lyase 9 (452 aa).

Positions 1–25 (MATSSLKLTSACFVLLFIFVGCVLT) are cleaved as a signal peptide. N88, N139, N214, and N233 each carry an N-linked (GlcNAc...) asparagine glycan. D250 is a binding site for Ca(2+). A glycan (N-linked (GlcNAc...) asparagine) is linked at N271. D274 and D278 together coordinate Ca(2+). 2 N-linked (GlcNAc...) asparagine glycosylation sites follow: N281 and N305. Residue R330 is part of the active site. The N-linked (GlcNAc...) asparagine glycan is linked to N374.

Belongs to the polysaccharide lyase 1 family. The cofactor is Ca(2+).

It carries out the reaction Eliminative cleavage of (1-&gt;4)-alpha-D-galacturonan to give oligosaccharides with 4-deoxy-alpha-D-galact-4-enuronosyl groups at their non-reducing ends.. The protein operates within glycan metabolism; pectin degradation; 2-dehydro-3-deoxy-D-gluconate from pectin: step 2/5. This chain is Probable pectate lyase 9, found in Arabidopsis thaliana (Mouse-ear cress).